A 148-amino-acid polypeptide reads, in one-letter code: UPF0260 protein PC1_1943 (148 aa).

Belongs to the UPF0260 family.

The protein is UPF0260 protein PC1_1943 of Pectobacterium carotovorum subsp. carotovorum (strain PC1).